A 328-amino-acid chain; its full sequence is DNA-directed RNA polymerase subunit alpha (328 aa).

Positions 1–230 (MSNHGLQMPE…DHVSFFIQLE (230 aa)) are alpha N-terminal domain (alpha-NTD). Positions 248 to 328 (RIRELLAQPV…EEYLEEKKAS (81 aa)) are alpha C-terminal domain (alpha-CTD).

It belongs to the RNA polymerase alpha chain family. As to quaternary structure, homodimer. The RNAP catalytic core consists of 2 alpha, 1 beta, 1 beta' and 1 omega subunit. When a sigma factor is associated with the core the holoenzyme is formed, which can initiate transcription.

It carries out the reaction RNA(n) + a ribonucleoside 5'-triphosphate = RNA(n+1) + diphosphate. DNA-dependent RNA polymerase catalyzes the transcription of DNA into RNA using the four ribonucleoside triphosphates as substrates. In Salinibacter ruber (strain DSM 13855 / M31), this protein is DNA-directed RNA polymerase subunit alpha.